The chain runs to 405 residues: Tryptophan synthase beta chain (405 aa).

Position 98 is an N6-(pyridoxal phosphate)lysine (lysine 98).

The protein belongs to the TrpB family. Tetramer of two alpha and two beta chains. Requires pyridoxal 5'-phosphate as cofactor.

The enzyme catalyses (1S,2R)-1-C-(indol-3-yl)glycerol 3-phosphate + L-serine = D-glyceraldehyde 3-phosphate + L-tryptophan + H2O. It participates in amino-acid biosynthesis; L-tryptophan biosynthesis; L-tryptophan from chorismate: step 5/5. In terms of biological role, the beta subunit is responsible for the synthesis of L-tryptophan from indole and L-serine. The sequence is that of Tryptophan synthase beta chain from Parvibaculum lavamentivorans (strain DS-1 / DSM 13023 / NCIMB 13966).